Consider the following 624-residue polypeptide: Chaperone protein HtpG (624 aa).

The tract at residues 1–336 (MKGQETRGFQ…SNDLPLNVSR (336 aa)) is a; substrate-binding. The interval 337–552 (EILQDSTVTR…ADEMSTQMAK (216 aa)) is b. The c stretch occupies residues 553–624 (LFAAAGQSVP…IRRMNQLLVS (72 aa)).

It belongs to the heat shock protein 90 family. In terms of assembly, homodimer.

Its subcellular location is the cytoplasm. In terms of biological role, molecular chaperone. Has ATPase activity. In Salmonella choleraesuis (strain SC-B67), this protein is Chaperone protein HtpG.